The chain runs to 1068 residues: TSC22 domain family protein 1 (1068 aa).

The segment at 1–98 (MHQPPESTAA…SQAQLQAQPL (98 aa)) is required for interaction with TGFBR1 and promotion of TGF-beta signaling. 3 disordered regions span residues 23–110 (AHPA…KKSG), 125–288 (ISSN…SPAS), and 602–623 (YSQA…QQLQ). A compositionally biased stretch (low complexity) spans 36-55 (GSASALNAAGTGVGSSATSS). Residues 58-70 (FPPPSLLQPPPPA) show a composition bias toward pro residues. Positions 84–100 (SLNLLSQAQLQAQPLAP) are enriched in low complexity. Residues 133–142 (EDTESYDDLD) show a composition bias toward acidic residues. A compositionally biased stretch (basic residues) spans 216–240 (HPHHLHHHHHIHHGHHLQHGHHHPS). The segment covering 241–250 (HVAVASASIP) has biased composition (low complexity). Positions 261-271 (KLSTTGSSDSI) are enriched in polar residues. Residue serine 263 is modified to Phosphoserine. The segment covering 272 to 288 (TPVAPTSAVSSSGSPAS) has biased composition (low complexity). Pro residues predominate over residues 609 to 620 (VQTPLPGAPPPQ). Residues 1000 to 1021 (VLKEQIKELIEKNSQLEQENNL) are leucine-zipper. The tract at residues 1032-1068 (AQFQAQLQTGSPPATTQPQGTTQPPAQPASQGSGPTA) is disordered. The segment covering 1039-1068 (QTGSPPATTQPQGTTQPPAQPASQGSGPTA) has biased composition (low complexity).

The protein belongs to the TSC-22/Dip/Bun family. In terms of assembly, forms homodimers. Forms heterodimers. Component of a complex composed of TSC22D1 (via N-terminus), TGFBR1 and TGFBR2; the interaction between TSC22D1 and TGFBR1 is inhibited by SMAD7 and promoted by TGFB1. Interacts with SMAD7; the interaction requires TGF-beta and the interaction is inhibited by TGFBR1. Interacts with TPT1/fortilin; interaction results in the destabilization of TSC22D1 protein and prevents TSC22D1-mediated apoptosis. Interacts with SMAD4 (via N-terminus). Interacts with ACVRL1/ALK1, ACVR1/ALK2, BMPR1A/ALK3, ACVR1B/ALK4, BMPR1B/ALK6, ACVR2A/ACTRII, and BMPR2. Interacts with SMAD6. Interacts with TFE3; the interaction is enhanced in the presence of TGF-beta. As to quaternary structure, forms a heterodimer with TSC22D4/THG1. Forms a heterodimer with TSC22D4/THG1. Interacts with histone H1-2. Interacts with GNL3.

The protein resides in the cytoplasm. The protein localises to the nucleus. It localises to the cell membrane. Its subcellular location is the mitochondrion. Functionally, transcriptional repressor. Acts on the C-type natriuretic peptide (CNP) promoter. Acts to promote CASP3-mediated apoptosis. Positively regulates TGF-beta signaling by interacting with SMAD7 which inhibits binding of SMAD7 to TGFBR1, preventing recruitment of SMURF ubiquitin ligases to TGFBR1 and inhibiting SMURF-mediated ubiquitination and degradation of TGFBR1. Contributes to enhancement of TGF-beta signaling by binding to and modulating the transcription activator activity of SMAD4. Promotes TGF-beta-induced transcription of COL1A2; via its interaction with TFE3 at E-boxes in the gene proximal promoter. Plays a role in the repression of hematopoietic precursor cell growth. Promotes IL2 deprivation-induced apoptosis in T-lymphocytes, via repression of TSC22D3/GILZ transcription and activation of the caspase cascade. May act to negatively regulate TGFB3 signaling and thereby inhibit cell death in mammary gland cells. In terms of biological role, positively regulates cell death in response to TGFB3 during mammary gland involution. The sequence is that of TSC22 domain family protein 1 from Macaca fascicularis (Crab-eating macaque).